A 338-amino-acid polypeptide reads, in one-letter code: Holliday junction branch migration complex subunit RuvB (338 aa).

Residues 1–14 show a composition bias toward basic and acidic residues; sequence MENDHGILSDHPSG. Residues 1–21 are disordered; sequence MENDHGILSDHPSGEEESQVE. The interval 3-185 is large ATPase domain (RuvB-L); sequence NDHGILSDHP…FGIVEHMNYY (183 aa). Residues Leu-24, Arg-25, Gly-66, Lys-69, Thr-70, Thr-71, 132 to 134, Arg-175, Tyr-185, and Arg-222 contribute to the ATP site; that span reads EDY. Thr-70 lines the Mg(2+) pocket. The interval 186–256 is small ATPAse domain (RuvB-S); sequence TQDELTKIIF…IVKQALSLLQ (71 aa). Positions 259–338 are head domain (RuvB-H); that stretch reads DRGLDEIDRK…LGIEYPTDKN (80 aa). The DNA site is built by Arg-314 and Arg-319.

Belongs to the RuvB family. As to quaternary structure, homohexamer. Forms an RuvA(8)-RuvB(12)-Holliday junction (HJ) complex. HJ DNA is sandwiched between 2 RuvA tetramers; dsDNA enters through RuvA and exits via RuvB. An RuvB hexamer assembles on each DNA strand where it exits the tetramer. Each RuvB hexamer is contacted by two RuvA subunits (via domain III) on 2 adjacent RuvB subunits; this complex drives branch migration. In the full resolvosome a probable DNA-RuvA(4)-RuvB(12)-RuvC(2) complex forms which resolves the HJ.

It localises to the cytoplasm. The catalysed reaction is ATP + H2O = ADP + phosphate + H(+). In terms of biological role, the RuvA-RuvB-RuvC complex processes Holliday junction (HJ) DNA during genetic recombination and DNA repair, while the RuvA-RuvB complex plays an important role in the rescue of blocked DNA replication forks via replication fork reversal (RFR). RuvA specifically binds to HJ cruciform DNA, conferring on it an open structure. The RuvB hexamer acts as an ATP-dependent pump, pulling dsDNA into and through the RuvAB complex. RuvB forms 2 homohexamers on either side of HJ DNA bound by 1 or 2 RuvA tetramers; 4 subunits per hexamer contact DNA at a time. Coordinated motions by a converter formed by DNA-disengaged RuvB subunits stimulates ATP hydrolysis and nucleotide exchange. Immobilization of the converter enables RuvB to convert the ATP-contained energy into a lever motion, pulling 2 nucleotides of DNA out of the RuvA tetramer per ATP hydrolyzed, thus driving DNA branch migration. The RuvB motors rotate together with the DNA substrate, which together with the progressing nucleotide cycle form the mechanistic basis for DNA recombination by continuous HJ branch migration. Branch migration allows RuvC to scan DNA until it finds its consensus sequence, where it cleaves and resolves cruciform DNA. The sequence is that of Holliday junction branch migration complex subunit RuvB from Limosilactobacillus reuteri (strain DSM 20016) (Lactobacillus reuteri).